The following is a 412-amino-acid chain: Arginine biosynthesis bifunctional protein ArgJ (412 aa).

Substrate-binding residues include Thr-158, Lys-184, Thr-195, Glu-284, Asn-407, and Ser-412. The active-site Nucleophile is Thr-195.

Belongs to the ArgJ family. Heterotetramer of two alpha and two beta chains.

It localises to the cytoplasm. It catalyses the reaction N(2)-acetyl-L-ornithine + L-glutamate = N-acetyl-L-glutamate + L-ornithine. The catalysed reaction is L-glutamate + acetyl-CoA = N-acetyl-L-glutamate + CoA + H(+). The protein operates within amino-acid biosynthesis; L-arginine biosynthesis; L-ornithine and N-acetyl-L-glutamate from L-glutamate and N(2)-acetyl-L-ornithine (cyclic): step 1/1. It functions in the pathway amino-acid biosynthesis; L-arginine biosynthesis; N(2)-acetyl-L-ornithine from L-glutamate: step 1/4. Catalyzes two activities which are involved in the cyclic version of arginine biosynthesis: the synthesis of N-acetylglutamate from glutamate and acetyl-CoA as the acetyl donor, and of ornithine by transacetylation between N(2)-acetylornithine and glutamate. The polypeptide is Arginine biosynthesis bifunctional protein ArgJ (Bartonella quintana (strain Toulouse) (Rochalimaea quintana)).